The sequence spans 1459 residues: Mediator of RNA polymerase II transcription subunit 14 (1459 aa).

The interval 1-37 (MAPVQLDNHQLIPPGGGGGSSGGGGSSSGSASAPAPP) is disordered. A compositionally biased stretch (gly residues) spans 14–27 (PGGGGGSSGGGGSS). Positions 75 to 79 (LTDLL) match the LXXLL motif 1 motif. Residues 194–572 (KQATLHQLNQ…VPNKPTQLSY (379 aa)) are interaction with STAT2. The segment at 506–830 (LGQQRCKQSI…TKGSSISIQW (325 aa)) is interaction with SREBF1. Phosphoserine is present on residues serine 623 and serine 992. Positions 979 to 1171 (ARRRSVNEDD…NMPPPRKLPQ (193 aa)) are disordered. 2 stretches are compositionally biased toward polar residues: residues 1029 to 1059 (PPTSYHSTVNQSPSMMHTQSPGNLHAASSPS) and 1097 to 1106 (DPSSPYTMVS). A phosphoserine mark is found at serine 1117, serine 1124, serine 1133, serine 1141, and serine 1149. A compositionally biased stretch (polar residues) spans 1152–1161 (AGTSSQTMPT). The short motif at 1187-1191 (LNILL) is the LXXLL motif 2 element.

This sequence belongs to the Mediator complex subunit 14 family. As to quaternary structure, component of the Mediator complex, which is composed of MED1, MED4, MED6, MED7, MED8, MED9, MED10, MED11, MED12, MED13, MED13L, MED14, MED15, MED16, MED17, MED18, MED19, MED20, MED21, MED22, MED23, MED24, MED25, MED26, MED27, MED29, MED30, MED31, CCNC, CDK8 and CDC2L6/CDK11. The MED12, MED13, CCNC and CDK8 subunits form a distinct module termed the CDK8 module. Mediator containing the CDK8 module is less active than Mediator lacking this module in supporting transcriptional activation. Individual preparations of the Mediator complex lacking one or more distinct subunits have been variously termed ARC, CRSP, DRIP, PC2, SMCC and TRAP. Interacts with AR, ESR1, SREBF1 and STAT2. Interacts with GATA1.

The protein localises to the nucleus. Component of the Mediator complex, a coactivator involved in the regulated transcription of nearly all RNA polymerase II-dependent genes. Mediator functions as a bridge to convey information from gene-specific regulatory proteins to the basal RNA polymerase II transcription machinery. Mediator is recruited to promoters by direct interactions with regulatory proteins and serves as a scaffold for the assembly of a functional preinitiation complex with RNA polymerase II and the general transcription factors. This is Mediator of RNA polymerase II transcription subunit 14 (Med14) from Mus musculus (Mouse).